The sequence spans 415 residues: Gamma-glutamyl phosphate reductase (415 aa).

Belongs to the gamma-glutamyl phosphate reductase family.

It localises to the cytoplasm. The enzyme catalyses L-glutamate 5-semialdehyde + phosphate + NADP(+) = L-glutamyl 5-phosphate + NADPH + H(+). The protein operates within amino-acid biosynthesis; L-proline biosynthesis; L-glutamate 5-semialdehyde from L-glutamate: step 2/2. Catalyzes the NADPH-dependent reduction of L-glutamate 5-phosphate into L-glutamate 5-semialdehyde and phosphate. The product spontaneously undergoes cyclization to form 1-pyrroline-5-carboxylate. The sequence is that of Gamma-glutamyl phosphate reductase from Pseudoalteromonas translucida (strain TAC 125).